The sequence spans 426 residues: D-tagatose-1,6-bisphosphate aldolase subunit KbaZ (426 aa).

This sequence belongs to the GatZ/KbaZ family. KbaZ subfamily. Forms a complex with KbaY.

The protein operates within carbohydrate metabolism; D-tagatose 6-phosphate degradation; D-glyceraldehyde 3-phosphate and glycerone phosphate from D-tagatose 6-phosphate: step 2/2. In terms of biological role, component of the tagatose-1,6-bisphosphate aldolase KbaYZ that is required for full activity and stability of the Y subunit. Could have a chaperone-like function for the proper and stable folding of KbaY. When expressed alone, KbaZ does not show any aldolase activity. In Escherichia coli O6:H1 (strain CFT073 / ATCC 700928 / UPEC), this protein is D-tagatose-1,6-bisphosphate aldolase subunit KbaZ.